A 250-amino-acid polypeptide reads, in one-letter code: Triosephosphate isomerase (250 aa).

Residue 8 to 10 (NWK) participates in substrate binding. Residue His96 is the Electrophile of the active site. Residue Glu169 is the Proton acceptor of the active site. Substrate is bound by residues Gly175, Ser214, and 235 to 236 (GG).

It belongs to the triosephosphate isomerase family. Homodimer.

The protein localises to the cytoplasm. It catalyses the reaction D-glyceraldehyde 3-phosphate = dihydroxyacetone phosphate. The protein operates within carbohydrate biosynthesis; gluconeogenesis. Its pathway is carbohydrate degradation; glycolysis; D-glyceraldehyde 3-phosphate from glycerone phosphate: step 1/1. Functionally, involved in the gluconeogenesis. Catalyzes stereospecifically the conversion of dihydroxyacetone phosphate (DHAP) to D-glyceraldehyde-3-phosphate (G3P). The polypeptide is Triosephosphate isomerase (Oleidesulfovibrio alaskensis (strain ATCC BAA-1058 / DSM 17464 / G20) (Desulfovibrio alaskensis)).